The primary structure comprises 175 residues: Large ribosomal subunit protein uL10 (175 aa).

This sequence belongs to the universal ribosomal protein uL10 family. In terms of assembly, part of the ribosomal stalk of the 50S ribosomal subunit. The N-terminus interacts with L11 and the large rRNA to form the base of the stalk. The C-terminus forms an elongated spine to which L12 dimers bind in a sequential fashion forming a multimeric L10(L12)X complex.

In terms of biological role, forms part of the ribosomal stalk, playing a central role in the interaction of the ribosome with GTP-bound translation factors. This Methylobacterium nodulans (strain LMG 21967 / CNCM I-2342 / ORS 2060) protein is Large ribosomal subunit protein uL10.